We begin with the raw amino-acid sequence, 186 residues long: ATP synthase subunit b (186 aa).

The chain crosses the membrane as a helical span at residues 5–25 (LILNLLVLLAPAAVFAAGGGH).

This sequence belongs to the ATPase B chain family. F-type ATPases have 2 components, F(1) - the catalytic core - and F(0) - the membrane proton channel. F(1) has five subunits: alpha(3), beta(3), gamma(1), delta(1), epsilon(1). F(0) has three main subunits: a(1), b(2) and c(10-14). The alpha and beta chains form an alternating ring which encloses part of the gamma chain. F(1) is attached to F(0) by a central stalk formed by the gamma and epsilon chains, while a peripheral stalk is formed by the delta and b chains.

Its subcellular location is the cell inner membrane. In terms of biological role, f(1)F(0) ATP synthase produces ATP from ADP in the presence of a proton or sodium gradient. F-type ATPases consist of two structural domains, F(1) containing the extramembraneous catalytic core and F(0) containing the membrane proton channel, linked together by a central stalk and a peripheral stalk. During catalysis, ATP synthesis in the catalytic domain of F(1) is coupled via a rotary mechanism of the central stalk subunits to proton translocation. Its function is as follows. Component of the F(0) channel, it forms part of the peripheral stalk, linking F(1) to F(0). The polypeptide is ATP synthase subunit b (Bdellovibrio bacteriovorus (strain ATCC 15356 / DSM 50701 / NCIMB 9529 / HD100)).